Reading from the N-terminus, the 99-residue chain is UPF0235 protein Neut_2146 (99 aa).

The protein belongs to the UPF0235 family.

The polypeptide is UPF0235 protein Neut_2146 (Nitrosomonas eutropha (strain DSM 101675 / C91 / Nm57)).